Consider the following 306-residue polypeptide: Homoserine O-acetyltransferase (306 aa).

Residue Cys-142 is the Acyl-thioester intermediate of the active site. Substrate is bound by residues Lys-163 and Ser-192. Residue His-235 is the Proton acceptor of the active site. Glu-237 is a catalytic residue. Arg-249 provides a ligand contact to substrate.

It belongs to the MetA family.

It is found in the cytoplasm. It catalyses the reaction L-homoserine + acetyl-CoA = O-acetyl-L-homoserine + CoA. Its pathway is amino-acid biosynthesis; L-methionine biosynthesis via de novo pathway; O-acetyl-L-homoserine from L-homoserine: step 1/1. Its function is as follows. Transfers an acetyl group from acetyl-CoA to L-homoserine, forming acetyl-L-homoserine. This Clostridium botulinum (strain Alaska E43 / Type E3) protein is Homoserine O-acetyltransferase.